We begin with the raw amino-acid sequence, 131 residues long: Capsid protein (131 aa).

Gln-2 and Tyr-131 together coordinate Ca(2+).

It belongs to the Leviviricetes capsid protein family. As to quaternary structure, homodimer. The capsid proteins form dimers that assemble by group of 5. Twelve such pentamers are linked together with free dimers. The homodimers binds to the viral RNA via an operator hairpin, but also to many other RNA sequences in the viral genome; this interaction probably shifts the virus from the replicative to the assembly phase and ensures specific encapsidation of the viral genome.

It localises to the virion. Capsid protein self-assembles to form an icosahedral capsid with a T=3 symmetry, about 26 nm in diameter, and consisting of 89 capsid proteins dimers (178 capsid proteins). Involved in viral genome encapsidation through the interaction between a capsid protein dimer and the multiple packaging signals present in the RNA genome. The capsid also contains 1 copy of the A2 maturation protein. In terms of biological role, acts as a translational repressor of viral replicase synthesis late in infection. This latter function is the result of capsid protein interaction with an RNA hairpin which contains the replicase ribosome-binding site. In Pseudomonas phage PRR1 (Bacteriophage PRR1), this protein is Capsid protein.